A 561-amino-acid polypeptide reads, in one-letter code: Nucleoprotein (561 aa).

Residues 53 to 237 (MRKDKRSEAD…ITQEPAQINI (185 aa)) form a binding site for the cap structure m7GTP region. The Mn(2+) site is built by Asp-380 and Glu-382. Zn(2+) contacts are provided by Glu-390, Cys-497, His-500, and Cys-521. Asp-525 is a binding site for Mn(2+).

This sequence belongs to the arenaviridae nucleocapsid protein family. In terms of assembly, homomultimerizes to form the nucleocapsid. Binds to viral genomic RNA. Interacts with glycoprotein G2. Interacts with protein Z; this interaction probably directs the encapsidated genome to budding sites. Interacts with protein L; this interaction does not interfere with Z-L interaction. Interacts with host IKBKE (via Protein kinase domain); the interaction inhibits IKBKE kinase activity.

The protein localises to the virion. It is found in the host cytoplasm. In terms of biological role, encapsidates the genome, protecting it from nucleases. The encapsidated genomic RNA is termed the nucleocapsid (NC). Serves as template for viral transcription and replication. The increased presence of protein N in host cell does not seem to trigger the switch from transcription to replication as observed in other negative strain RNA viruses. Through the interaction with host IKBKE, strongly inhibits the phosphorylation and nuclear translocation of host IRF3, a protein involved in interferon activation pathway, leading to the inhibition of interferon-beta and IRF3-dependent promoters activation. Also encodes a functional 3'-5' exoribonuclease that degrades preferentially dsRNA substrates and thereby participates in the suppression of interferon induction. In Allpahuayo mammarenavirus (isolate Rat/Peru/CLHP-2472/1997) (ALLV), this protein is Nucleoprotein.